We begin with the raw amino-acid sequence, 395 residues long: Phosphatidylinositol 4-phosphate 5-kinase-like protein 1 (395 aa).

The tract at residues 1-25 (MATPSLRSHEIPAHSQEAGNKSISS) is disordered. The 358-residue stretch at 37–394 (ARQSRVGLFE…RLCRWAEVHT (358 aa)) folds into the PIPK domain.

As to quaternary structure, interacts with type I phosphatidylinositol 4-phosphate 5-kinases, including PIP5K1A and PIP5K1B. Highly expressed in brain and testis, relatively to heart, spleen, lung, liver, skeletal muscle and kidney.

The protein localises to the cytoplasm. It is found in the membrane. Its function is as follows. May act as a scaffold to localize and regulate type I phosphatidylinositol 4-phosphate 5-kinases to specific compartments within the cell, where they generate PI(4,5)P2 for actin nucleation, signaling and scaffold protein recruitment and conversion to PI(3,4,5)P3. This Mus musculus (Mouse) protein is Phosphatidylinositol 4-phosphate 5-kinase-like protein 1 (Pip5kl1).